We begin with the raw amino-acid sequence, 117 residues long: MAYGLPRRNTVQTILKGSCYKVQEPWDLAELTKTWYTNLTNIRLPFLGEIVFGSPMNLLASQTKQECQFPSMQSMALEKEYEAKRLTKLKCQENVCKEIQASLREKKVGLRRPLQPK.

This is an uncharacterized protein from Mus musculus (Mouse).